A 529-amino-acid chain; its full sequence is Hyaluronidase PH-20 (529 aa).

Residues 1-35 (MGAFTFKHSFFGSFVECSGVLQTVFIFLLIPCCLA) form the signal peptide. 2 disulfides stabilise this stretch: Cys-59-Cys-351 and Cys-223-Cys-237. N-linked (GlcNAc...) asparagine glycosylation occurs at Asn-81. Glu-147 (proton donor) is an active-site residue. N-linked (GlcNAc...) asparagine glycans are attached at residues Asn-165 and Asn-179. N-linked (GlcNAc...) asparagine glycans are attached at residues Asn-253 and Asn-368. Intrachain disulfides connect Cys-376/Cys-387, Cys-381/Cys-435, and Cys-437/Cys-464. N-linked (GlcNAc...) asparagine glycosylation occurs at Asn-401. Residues 478-502 (DEPPITDDTSQNQDSISDITSSAPP) form a disordered region. Polar residues predominate over residues 487–502 (SQNQDSISDITSSAPP). Ser-492 carries GPI-anchor amidated serine lipidation. Positions 493 to 529 (ISDITSSAPPSSHILPKDLSWCLFLLSIFSQHWKYLL) are cleaved as a propeptide — removed in mature form.

This sequence belongs to the glycosyl hydrolase 56 family. Endoproteolysis (toward the C-terminus producing two disulfide-linked fragments) could activate PH-20. Testis.

Its subcellular location is the cell membrane. The enzyme catalyses Random hydrolysis of (1-&gt;4)-linkages between N-acetyl-beta-D-glucosamine and D-glucuronate residues in hyaluronate.. Its function is as follows. Involved in sperm-egg adhesion. Upon fertilization sperm must first penetrate a layer of cumulus cells that surrounds the egg before reaching the zona pellucida. The cumulus cells are embedded in a matrix containing hyaluronic acid which is formed prior to ovulation. This protein aids in penetrating the layer of cumulus cells by digesting hyaluronic acid. The protein is Hyaluronidase PH-20 (SPAM1) of Cavia porcellus (Guinea pig).